A 198-amino-acid chain; its full sequence is Nucleoid occlusion factor SlmA (198 aa).

In terms of domain architecture, HTH tetR-type spans 9-70 (RNRREEILQA…SLIEFIEDSL (62 aa)). Residues 33 to 52 (TTAKLAANVGVSEAALYRHF) constitute a DNA-binding region (H-T-H motif). The stretch at 117 to 144 (EQDRLQGRINQLFERIEAQLRQVLKERK) forms a coiled coil.

The protein belongs to the nucleoid occlusion factor SlmA family. As to quaternary structure, homodimer. Interacts with FtsZ.

It is found in the cytoplasm. It localises to the nucleoid. Its function is as follows. Required for nucleoid occlusion (NO) phenomenon, which prevents Z-ring formation and cell division over the nucleoid. Acts as a DNA-associated cell division inhibitor that binds simultaneously chromosomal DNA and FtsZ, and disrupts the assembly of FtsZ polymers. SlmA-DNA-binding sequences (SBS) are dispersed on non-Ter regions of the chromosome, preventing FtsZ polymerization at these regions. This Serratia proteamaculans (strain 568) protein is Nucleoid occlusion factor SlmA.